Reading from the N-terminus, the 432-residue chain is Enolase (432 aa).

Residue Gln-167 participates in (2R)-2-phosphoglycerate binding. The active-site Proton donor is Glu-209. Mg(2+) is bound by residues Asp-246, Glu-290, and Asp-317. (2R)-2-phosphoglycerate contacts are provided by Lys-342, Arg-371, Ser-372, and Lys-393. Catalysis depends on Lys-342, which acts as the Proton acceptor.

The protein belongs to the enolase family. In terms of assembly, component of the RNA degradosome, a multiprotein complex involved in RNA processing and mRNA degradation. It depends on Mg(2+) as a cofactor.

It localises to the cytoplasm. The protein resides in the secreted. The protein localises to the cell surface. The enzyme catalyses (2R)-2-phosphoglycerate = phosphoenolpyruvate + H2O. The protein operates within carbohydrate degradation; glycolysis; pyruvate from D-glyceraldehyde 3-phosphate: step 4/5. Functionally, catalyzes the reversible conversion of 2-phosphoglycerate (2-PG) into phosphoenolpyruvate (PEP). It is essential for the degradation of carbohydrates via glycolysis. The protein is Enolase of Escherichia coli O139:H28 (strain E24377A / ETEC).